We begin with the raw amino-acid sequence, 147 residues long: Hemoglobin subunit beta (147 aa).

In terms of domain architecture, Globin spans 3–147 (EWTDKERTII…VVSALGKQYH (145 aa)). Positions 64 and 93 each coordinate heme b.

This sequence belongs to the globin family. Heterotetramer of two alpha chains and two beta chains. Red blood cells.

Functionally, involved in oxygen transport from gills to the various peripheral tissues. The protein is Hemoglobin subunit beta of Trematomus newnesi (Dusky notothen).